We begin with the raw amino-acid sequence, 616 residues long: Protein cereblon (616 aa).

3 disordered regions span residues 1-39 (MDEE…DDSV), 63-137 (FGPS…AMPR), and 182-220 (SQER…DIDM). Low complexity predominate over residues 11 to 32 (AQEQEVAGSAGEAAAGPSGAEV). A compositionally biased stretch (acidic residues) spans 96 to 107 (SEEDIVLDDGTE). The segment covering 183–192 (QERRRSRNSD) has biased composition (basic and acidic residues). Positions 194–203 (VSPEAEDDEL) are enriched in acidic residues. Pro residues predominate over residues 206–215 (HPPPPPPRPP). Residues 257 to 482 (HMLIFLHQYI…LIGGILKEET (226 aa)) enclose the Lon N-terminal domain. The CULT domain maps to 481 to 590 (ETLFYCRYCN…LAGSSVRIGK (110 aa)). Zn(2+) is bound by residues cysteine 486, cysteine 489, cysteine 555, and cysteine 558.

The protein belongs to the CRBN family. Likely a component of a DCX (DDB1-CUL4-X-box) protein ligase complex. May interact with pic/DDB1. Post-translationally, ubiquitinated.

It is found in the nucleus. Its pathway is protein modification; protein ubiquitination. In terms of biological role, substrate recognition component of a DCX (DDB1-CUL4-X-box) E3 protein ligase complex that mediates the ubiquitination and subsequent proteasomal degradation of target proteins. Has an essential role in mediating growth by negatively regulating insulin signaling. It also has a role in maintaining presynaptic function in the neuromuscular junction synapses of third-instar larvae. The sequence is that of Protein cereblon from Drosophila persimilis (Fruit fly).